A 204-amino-acid polypeptide reads, in one-letter code: Somatotropin (204 aa).

Positions 1-17 (MDRVVLMLSVLSLGVSS) are cleaved as a signal peptide. Residue Gln-18 is modified to Pyrrolidone carboxylic acid. Position 36 (His-36) interacts with Zn(2+). Cysteines 69 and 177 form a disulfide. Glu-186 lines the Zn(2+) pocket. An intrachain disulfide couples Cys-194 to Cys-202.

Belongs to the somatotropin/prolactin family.

It is found in the secreted. In terms of biological role, growth hormone plays an important role in growth control and is involved in the regulation of several anabolic processes. Implicated as an osmoregulatory substance important for seawater adaptation. This is Somatotropin (gh) from Acanthopagrus butcheri (Australian black bream).